The sequence spans 300 residues: GTPase Era (300 aa).

The region spanning 8–176 is the Era-type G domain; that stretch reads RCGYVAIVGR…ESLIASHLPE (169 aa). Residues 16–23 are G1; it reads GRPNVGKS. Position 16 to 23 (16 to 23) interacts with GTP; it reads GRPNVGKS. Positions 42-46 are G2; that stretch reads QTTRH. The tract at residues 63 to 66 is G3; it reads DTPG. Residues 63–67 and 125–128 contribute to the GTP site; these read DTPGM and NKTD. The segment at 125 to 128 is G4; it reads NKTD. Residues 155-157 form a G5 region; it reads ISA. Residues 199–283 enclose the KH type-2 domain; sequence VREKIMRQLG…MLNLWVKVKG (85 aa).

The protein belongs to the TRAFAC class TrmE-Era-EngA-EngB-Septin-like GTPase superfamily. Era GTPase family. As to quaternary structure, monomer.

The protein localises to the cytoplasm. It is found in the cell inner membrane. Functionally, an essential GTPase that binds both GDP and GTP, with rapid nucleotide exchange. Plays a role in 16S rRNA processing and 30S ribosomal subunit biogenesis and possibly also in cell cycle regulation and energy metabolism. The protein is GTPase Era of Pseudomonas savastanoi pv. phaseolicola (strain 1448A / Race 6) (Pseudomonas syringae pv. phaseolicola (strain 1448A / Race 6)).